A 185-amino-acid chain; its full sequence is Ribosome-recycling factor (185 aa).

This sequence belongs to the RRF family.

Its subcellular location is the cytoplasm. In terms of biological role, responsible for the release of ribosomes from messenger RNA at the termination of protein biosynthesis. May increase the efficiency of translation by recycling ribosomes from one round of translation to another. This is Ribosome-recycling factor from Pseudomonas syringae pv. tomato (strain ATCC BAA-871 / DC3000).